The primary structure comprises 508 residues: Putative adenosylhomocysteinase 3 (508 aa).

Phosphoserine is present on S4. Positions 24 to 81 (DQKQEFNKRPTKIGRRSLSRSISQSSTDSYSSAASYTDSSDDETSPRDKQQKNSKGSS) are disordered. Residues 32-41 (RPTKIGRRSL) show a composition bias toward basic residues. A compositionally biased stretch (low complexity) spans 42–61 (SRSISQSSTDSYSSAASYTD). Residues S46, S49, S52, and S55 each carry the phosphoserine modification. Substrate contacts are provided by T133, D207, and E232. An NAD(+)-binding site is contributed by 233–235 (SVT). Substrate is bound by residues K262 and D266. NAD(+)-binding positions include N267, 298–303 (GEVGKG), E319, N354, 375–377 (IGH), and N422.

It belongs to the adenosylhomocysteinase family. As to quaternary structure, homotetramer. Forms heteromultimers with AHCYL1 (via the C-terminal region). Interacts with ITPR1; with lower affinity than AHCYL1 and maybe via ITPR1. Interacts with SLC4A4. Interacts with ZCCHC4. It depends on NAD(+) as a cofactor.

The protein resides in the cytoplasm. The protein localises to the microsome. It carries out the reaction S-adenosyl-L-homocysteine + H2O = L-homocysteine + adenosine. It participates in amino-acid biosynthesis; L-homocysteine biosynthesis; L-homocysteine from S-adenosyl-L-homocysteine: step 1/1. Its function is as follows. May regulate the electrogenic sodium/bicarbonate cotransporter SLC4A4 activity and Mg(2+)-sensitivity. On the contrary of its homolog AHCYL1, does not regulate ITPR1 sensitivity to inositol 1,4,5-trisphosphate. The polypeptide is Putative adenosylhomocysteinase 3 (AHCYL2) (Pongo abelii (Sumatran orangutan)).